The chain runs to 398 residues: Cell division protein FtsZ (398 aa).

GTP contacts are provided by residues 24–28, 111–113, E154, R158, and D202; these read GAGGN and GTG. The segment at 333 to 381 is disordered; sequence GRNNKSETSPISQSEDSEKEKFKWPYSQSESTQDKTLETKPAEQVSEGA. The span at 364 to 373 shows a compositional bias: basic and acidic residues; it reads TQDKTLETKP.

This sequence belongs to the FtsZ family. As to quaternary structure, homodimer. Polymerizes to form a dynamic ring structure in a strictly GTP-dependent manner. Interacts directly with several other division proteins.

The protein localises to the cytoplasm. Functionally, essential cell division protein that forms a contractile ring structure (Z ring) at the future cell division site. The regulation of the ring assembly controls the timing and the location of cell division. One of the functions of the FtsZ ring is to recruit other cell division proteins to the septum to produce a new cell wall between the dividing cells. Binds GTP and shows GTPase activity. The protein is Cell division protein FtsZ of Wolbachia sp.